We begin with the raw amino-acid sequence, 199 residues long: Elongation factor Ts (199 aa).

The involved in Mg(2+) ion dislocation from EF-Tu stretch occupies residues 81-84 (TDFV).

It belongs to the EF-Ts family.

The protein localises to the cytoplasm. In terms of biological role, associates with the EF-Tu.GDP complex and induces the exchange of GDP to GTP. It remains bound to the aminoacyl-tRNA.EF-Tu.GTP complex up to the GTP hydrolysis stage on the ribosome. This Thermotoga sp. (strain RQ2) protein is Elongation factor Ts.